A 463-amino-acid polypeptide reads, in one-letter code: MKLHTRTLLAPSTRFFSSTSIHRALNRPHRPHSPTHAQSKPQHESRFQPRTGSNLSPRQTRFGNNNERYGSASGKQLGQNDRYRGDFAPKRYNNHNNNSNNNNNGGYPSSNVNSRNAAPPNQKLNINHFANDKFAKDGYYTRRDLYELQEILESSTESTRDAIRSLLNQLVDIAPDRFVNLVTDQGLKETDIKFVIKNLDLKKEGISIHSSSRKADSKTEDGADKGASTKPQLPIVRIRPIRDMIQAYSEEKAKLKELELISMGSKKALRQMDKKLKTAQKQSSEKSIQFTWGISMNDLKNQKFNELKNRLLGSKGSNKVNLYLIHDQRRADWSVYDIYKKDQLGEQVKLELKRRQLVKKTVEEMLNNEELGWTWTSEGDVETKLVYSITKKPTTGGTNSTSTIKQTDKNRDGTIRDKKKEKLGSAVSASISLQQAEPKPPAKEKKKLTDEDLDALYSFKIDD.

Residues 1–69 (MKLHTRTLLA…TRFGNNNERY (69 aa)) constitute a mitochondrion transit peptide. 3 disordered regions span residues 25-124 (LNRP…NQKL), 208-229 (IHSS…GAST), and 391-449 (KKPT…KKLT). Positions 48 to 79 (QPRTGSNLSPRQTRFGNNNERYGSASGKQLGQ) are enriched in polar residues. Over residues 94–114 (NHNNNSNNNNNGGYPSSNVNS) the composition is skewed to low complexity. Over residues 213–224 (RKADSKTEDGAD) the composition is skewed to basic and acidic residues. Positions 391–405 (KKPTTGGTNSTSTIK) are enriched in polar residues. Basic and acidic residues-rich tracts occupy residues 406-423 (QTDK…KEKL) and 440-449 (PPAKEKKKLT).

Belongs to the AIM23 family.

It localises to the mitochondrion. The chain is Altered inheritance of mitochondria protein 23, mitochondrial (AIM23) from Lodderomyces elongisporus (strain ATCC 11503 / CBS 2605 / JCM 1781 / NBRC 1676 / NRRL YB-4239) (Yeast).